We begin with the raw amino-acid sequence, 152 residues long: Large ribosomal subunit protein uL15 (152 aa).

The disordered stretch occupies residues 18–37 (RVARGIGSGKGKTAGRGVKG). Gly residues predominate over residues 23–35 (IGSGKGKTAGRGV).

This sequence belongs to the universal ribosomal protein uL15 family. As to quaternary structure, part of the 50S ribosomal subunit.

Functionally, binds to the 23S rRNA. In Rickettsia bellii (strain OSU 85-389), this protein is Large ribosomal subunit protein uL15.